Here is an 85-residue protein sequence, read N- to C-terminus: MASPLSPGSRILIGLIRGYQLVISPLLGPRCRFHPTCSHYGIEALRRFGMIKGSWLTLKRVLKCHPLNSGGDDPVPPKLDDNREH.

The interval 66 to 85 (PLNSGGDDPVPPKLDDNREH) is disordered.

Belongs to the UPF0161 family.

The protein localises to the cell inner membrane. Its function is as follows. Could be involved in insertion of integral membrane proteins into the membrane. This chain is Putative membrane protein insertion efficiency factor, found in Yersinia pestis bv. Antiqua (strain Antiqua).